A 464-amino-acid chain; its full sequence is ATP synthase subunit beta (464 aa).

ATP is bound at residue 148 to 155; that stretch reads GGAGVGKT.

It belongs to the ATPase alpha/beta chains family. F-type ATPases have 2 components, CF(1) - the catalytic core - and CF(0) - the membrane proton channel. CF(1) has five subunits: alpha(3), beta(3), gamma(1), delta(1), epsilon(1). CF(0) has three main subunits: a(1), b(2) and c(9-12). The alpha and beta chains form an alternating ring which encloses part of the gamma chain. CF(1) is attached to CF(0) by a central stalk formed by the gamma and epsilon chains, while a peripheral stalk is formed by the delta and b chains.

It localises to the cell inner membrane. The enzyme catalyses ATP + H2O + 4 H(+)(in) = ADP + phosphate + 5 H(+)(out). Produces ATP from ADP in the presence of a proton gradient across the membrane. The catalytic sites are hosted primarily by the beta subunits. In Marinobacter nauticus (strain ATCC 700491 / DSM 11845 / VT8) (Marinobacter aquaeolei), this protein is ATP synthase subunit beta.